The chain runs to 233 residues: Large ribosomal subunit protein uL1 (233 aa).

Belongs to the universal ribosomal protein uL1 family. As to quaternary structure, part of the 50S ribosomal subunit.

In terms of biological role, binds directly to 23S rRNA. The L1 stalk is quite mobile in the ribosome, and is involved in E site tRNA release. Its function is as follows. Protein L1 is also a translational repressor protein, it controls the translation of the L11 operon by binding to its mRNA. The polypeptide is Large ribosomal subunit protein uL1 (Pseudoalteromonas atlantica (strain T6c / ATCC BAA-1087)).